Consider the following 196-residue polypeptide: Agamous-like MADS-box protein AGL31 (196 aa).

Residues 1 to 61 (MGRKKVEIKR…GKLYKSASGD (61 aa)) enclose the MADS-box domain. The K-box domain occupies 80 to 170 (ALDLAEKTRN…ASQVGKKTFL (91 aa)).

In terms of tissue distribution, expressed in most plant tissues, roots, seedlings, leaves, stems, inflorescences, pollen, siliques and flowers.

It localises to the nucleus. In terms of biological role, probable transcription factor that prevents vernalization by short periods of cold. Acts as a floral repressor. This chain is Agamous-like MADS-box protein AGL31 (AGL31), found in Arabidopsis thaliana (Mouse-ear cress).